Reading from the N-terminus, the 580-residue chain is Protein O-linked-mannose beta-1,4-N-acetylglucosaminyltransferase 2 (580 aa).

Topologically, residues 1–4 (MHLS) are cytoplasmic. A helical; Signal-anchor for type II membrane protein membrane pass occupies residues 5–25 (AVLNALLVSVLAAVLWKHVRL). Over 26 to 580 (REHAASLEEE…PFADVLVCST (555 aa)) the chain is Lumenal. Asparagine 99 and asparagine 276 each carry an N-linked (GlcNAc...) asparagine glycan. Positions 488–580 (ARCQASVQGA…PFADVLVCST (93 aa)) constitute a Fibronectin type-III domain.

Belongs to the glycosyltransferase 61 family.

The protein resides in the endoplasmic reticulum membrane. It carries out the reaction 3-O-(alpha-D-mannosyl)-L-threonyl-[protein] + UDP-N-acetyl-alpha-D-glucosamine = 3-O-(N-acetyl-beta-D-glucosaminyl-(1-&gt;4)-alpha-D-mannosyl)-L-threonyl-[protein] + UDP + H(+). It participates in protein modification; protein glycosylation. Functionally, O-linked mannose beta-1,4-N-acetylglucosaminyltransferase that transfers UDP-N-acetyl-D-glucosamine to the 4-position of the mannose to generate N-acetyl-D-glucosamine-beta-1,4-O-D-mannosylprotein. Involved in the biosynthesis of the phosphorylated O-mannosyl trisaccharide (N-acetylgalactosamine-beta-3-N-acetylglucosamine-beta-4-(phosphate-6-)mannose), a carbohydrate structure present in alpha-dystroglycan (DAG1), which is required for binding laminin G-like domain-containing extracellular proteins with high affinity. The sequence is that of Protein O-linked-mannose beta-1,4-N-acetylglucosaminyltransferase 2 (POMGNT2) from Bos taurus (Bovine).